A 523-amino-acid chain; its full sequence is Cysteine-rich secretory protein LCCL domain-containing 1 (523 aa).

The signal sequence occupies residues 1–23; sequence MKYVVQEWLRITTLLFIAQAVSA. One can recognise an SCP domain in the interval 66-206; the sequence is LDLHNKLRGQ…PKAVYLVCNY (141 aa). The segment at 246–298 is disordered; the sequence is ERPYSPHEPEEETNEIERQRSKAQDATAQSRPRTHSPSGSTGSEDSEKNEVIS. Residues 269-288 are compositionally biased toward polar residues; the sequence is QDATAQSRPRTHSPSGSTGS. 2 consecutive LCCL domains span residues 302 to 397 and 403 to 505; these read MSQI…ANSF and TVQA…PGKQ. 4 disulfide bridges follow: C308/C326, C330/C350, C409/C431, and C435/C458.

This sequence belongs to the CRISP family.

The protein localises to the secreted. This chain is Cysteine-rich secretory protein LCCL domain-containing 1 (CRISPLD1), found in Gallus gallus (Chicken).